The primary structure comprises 126 residues: Adenosine 5'-monophosphoramidase HINT1 (126 aa).

A2 carries the N-acetylalanine modification. Residues 18 to 126 (IFGKIIRKEI…GGRQMHWPPG (109 aa)) form the HIT domain. N6-acetyllysine occurs at positions 21 and 30. 43 to 44 (DI) contributes to the AMP binding site. 2 positions are modified to phosphoserine: S45 and S72. AMP-binding positions include N99, 105–107 (GQS), and 112–114 (HLH). The Histidine triad motif signature appears at 110–114 (HVHLH). H112 serves as the catalytic Tele-AMP-histidine intermediate.

It belongs to the HINT family. As to quaternary structure, homodimer. Interacts with CDK7. Interacts with RUVBL1 and RUVBL2 and is associated with the LEF1/TCF1-CTNNB1 complex and with a KAT5 histone acetyltransferase complex. Identified in a complex with MITF and CTNNB1. Interacts with CDC34 and RBX1, and is part of a SCF (SKP2-CUL1-F-box protein) E3 ubiquitin-protein ligase complex. Interacts with SUMO1, SUMO2 and RGS17. Interacts with the Ten-1 ICD form of TENM1. Interacts with CALM1; interaction increases in the presence of calcium ions. In terms of tissue distribution, widely expressed.

The protein resides in the cytoplasm. The protein localises to the nucleus. The catalysed reaction is adenosine 5'-phosphoramidate + H2O = AMP + NH4(+). Functionally, exhibits adenosine 5'-monophosphoramidase activity, hydrolyzing purine nucleotide phosphoramidates with a single phosphate group such as adenosine 5'monophosphoramidate (AMP-NH2) to yield AMP and NH2. Hydrolyzes adenosine 5'monophosphomorpholidate (AMP-morpholidate) and guanosine 5'monophosphomorpholidate (GMP-morpholidate). Hydrolyzes lysyl-AMP (AMP-N-epsilon-(N-alpha-acetyl lysine methyl ester)) generated by lysine tRNA ligase, as well as Met-AMP, His-AMP and Asp-AMP, lysyl-GMP (GMP-N-epsilon-(N-alpha-acetyl lysine methyl ester)) and AMP-N-alanine methyl ester. Hydrolyzes 3-indolepropionic acyl-adenylate, tryptamine adenosine phosphoramidate monoester and other fluorogenic purine nucleoside tryptamine phosphoramidates in vitro. Can also convert adenosine 5'-O-phosphorothioate and guanosine 5'-O-phosphorothioate to the corresponding nucleoside 5'-O-phosphates with concomitant release of hydrogen sulfide. In addition, functions as scaffolding protein that modulates transcriptional activation by the LEF1/TCF1-CTNNB1 complex and by the complex formed with MITF and CTNNB1. Modulates p53/TP53 levels and p53/TP53-mediated apoptosis. Modulates proteasomal degradation of target proteins by the SCF (SKP2-CUL1-F-box protein) E3 ubiquitin-protein ligase complex. Also exhibits SUMO-specific isopeptidase activity, deconjugating SUMO1 from RGS17. Deconjugates SUMO1 from RANGAP1. The chain is Adenosine 5'-monophosphoramidase HINT1 (HINT1) from Homo sapiens (Human).